The following is a 76-amino-acid chain: Acyl carrier protein (76 aa).

The Carrier domain occupies 1–76; the sequence is MSIEERVKKI…SAIDYVQNNQ (76 aa). Position 36 is an O-(pantetheine 4'-phosphoryl)serine (S36).

Belongs to the acyl carrier protein (ACP) family. 4'-phosphopantetheine is transferred from CoA to a specific serine of apo-ACP by AcpS. This modification is essential for activity because fatty acids are bound in thioester linkage to the sulfhydryl of the prosthetic group.

The protein resides in the cytoplasm. It participates in lipid metabolism; fatty acid biosynthesis. In terms of biological role, carrier of the growing fatty acid chain in fatty acid biosynthesis. In Mannheimia succiniciproducens (strain KCTC 0769BP / MBEL55E), this protein is Acyl carrier protein.